The following is a 922-amino-acid chain: Lysine-specific demethylase 7A (922 aa).

A PHD-type zinc finger spans residues 6–57 (PVYCVCRQPYDVSRFMIECDICKDWFHSSCVKVEEHQAADIDLYHCPNCEVL). The 157-residue stretch at 199 to 355 (FSDTKMADLV…MQLRCYEMEK (157 aa)) folds into the JmjC domain. Position 248 (Thr-248) interacts with substrate. His-251 and Asp-253 together coordinate Fe cation. Lys-268 is a binding site for substrate. His-323 is a binding site for Fe cation. Disordered stretches follow at residues 445 to 490 (EEEG…TKTP), 565 to 607 (RSLY…TQKP), 622 to 711 (GSSE…EQEA), 754 to 773 (GKEHLDSHSHKAANSDHHVK), and 872 to 902 (LHPTKRPASNPPPISNQATKGKRPKKGMATA). The span at 473–483 (HHSGRKARRLR) shows a compositional bias: basic residues. Positions 648–666 (ESESSGDDDDEEEEEEEER) are enriched in acidic residues. Composition is skewed to basic and acidic residues over residues 667 to 683 (QEPIRNLKEEHSGRRLP) and 691 to 701 (PDHDSPQKREC).

This sequence belongs to the JHDM1 histone demethylase family. JHDM1D subfamily. It depends on Fe(2+) as a cofactor.

It is found in the nucleus. Its function is as follows. Histone demethylase required for brain development. Specifically demethylates dimethylated 'Lys-9' and 'Lys-27' (H3K9me2 and H3K27me2, respectively) of histone H3 and monomethylated histone H4 'Lys-20' residue (H4K20Me1), thereby playing a central role in histone code. In Xenopus tropicalis (Western clawed frog), this protein is Lysine-specific demethylase 7A (kdm7a).